Here is a 489-residue protein sequence, read N- to C-terminus: UDP-N-acetylmuramoyl-L-alanyl-D-glutamate--2,6-diaminopimelate ligase (489 aa).

S32 provides a ligand contact to UDP-N-acetyl-alpha-D-muramoyl-L-alanyl-D-glutamate. An ATP-binding site is contributed by 113–119; the sequence is GTNGKTT. UDP-N-acetyl-alpha-D-muramoyl-L-alanyl-D-glutamate is bound by residues 154 to 155, S181, Q187, and R189; that span reads TT. Residue K221 is modified to N6-carboxylysine. Meso-2,6-diaminopimelate-binding positions include R381, 405-408, G456, and E460; that span reads DNPR. The short motif at 405 to 408 is the Meso-diaminopimelate recognition motif element; it reads DNPR.

This sequence belongs to the MurCDEF family. MurE subfamily. Mg(2+) is required as a cofactor. Post-translationally, carboxylation is probably crucial for Mg(2+) binding and, consequently, for the gamma-phosphate positioning of ATP.

It is found in the cytoplasm. The enzyme catalyses UDP-N-acetyl-alpha-D-muramoyl-L-alanyl-D-glutamate + meso-2,6-diaminopimelate + ATP = UDP-N-acetyl-alpha-D-muramoyl-L-alanyl-gamma-D-glutamyl-meso-2,6-diaminopimelate + ADP + phosphate + H(+). It functions in the pathway cell wall biogenesis; peptidoglycan biosynthesis. Functionally, catalyzes the addition of meso-diaminopimelic acid to the nucleotide precursor UDP-N-acetylmuramoyl-L-alanyl-D-glutamate (UMAG) in the biosynthesis of bacterial cell-wall peptidoglycan. This is UDP-N-acetylmuramoyl-L-alanyl-D-glutamate--2,6-diaminopimelate ligase from Gloeobacter violaceus (strain ATCC 29082 / PCC 7421).